Reading from the N-terminus, the 394-residue chain is Probable peptidoglycan glycosyltransferase FtsW (394 aa).

Residues 1 to 27 (MEFLQNIKKNYDEWTRITPQGLLYDRA) are Cytoplasmic-facing. Residues 28–48 (LFWLFVILLLIGLVAVTSASI) traverse the membrane as a helical segment. The Periplasmic segment spans residues 49 to 66 (PYSSRLFNDPFYFAKRDA). Residues 67 to 87 (IYVLLSLLTCYISLQISSSQW) form a helical membrane-spanning segment. Topologically, residues 88–93 (EKWHAK) are cytoplasmic. Residues 94-114 (IFLFSVILLLLVPFIGTSVNG) form a helical membrane-spanning segment. Residues 115 to 120 (AKRWIS) lie on the Periplasmic side of the membrane. Residues 121–141 (LGILNFQPAEFAKLALTCFLA) form a helical membrane-spanning segment. The Cytoplasmic portion of the chain corresponds to 142–155 (SYFTRRYDEVRSRH). Helical transmembrane passes span 156–176 (VSIF…LLQP) and 177–197 (DLGS…IVGA). Residue Lys198 is a topological domain, cytoplasmic. A helical transmembrane segment spans residues 199–219 (ILQFVGLIALGGILFVWLVLT). Residues 220–277 (ASYRLKRFIGFLEPFKEPYGTGFQLTNSLIAFGRGEITGEGLGNSIQKLDYLPEAHTD) lie on the Periplasmic side of the membrane. The helical transmembrane segment at 278 to 298 (FIMAIIGEEFGFIGILIVILL) threads the bilayer. At 299 to 322 (LGLLIFRAMKIGRESLMLEQRFRG) the chain is on the cytoplasmic side. The helical transmembrane segment at 323 to 343 (FFALGIGFWIFFQGFVNLGMA) threads the bilayer. The Periplasmic segment spans residues 344-353 (LGMLPTKGLT). A helical transmembrane segment spans residues 354 to 374 (FPLVSYGGSSIIIMSATIGIL). At 375–394 (LRIDHENRLFRIGQARLRDD) the chain is on the cytoplasmic side.

It belongs to the SEDS family. FtsW subfamily.

It localises to the cell inner membrane. It catalyses the reaction [GlcNAc-(1-&gt;4)-Mur2Ac(oyl-L-Ala-gamma-D-Glu-L-Lys-D-Ala-D-Ala)](n)-di-trans,octa-cis-undecaprenyl diphosphate + beta-D-GlcNAc-(1-&gt;4)-Mur2Ac(oyl-L-Ala-gamma-D-Glu-L-Lys-D-Ala-D-Ala)-di-trans,octa-cis-undecaprenyl diphosphate = [GlcNAc-(1-&gt;4)-Mur2Ac(oyl-L-Ala-gamma-D-Glu-L-Lys-D-Ala-D-Ala)](n+1)-di-trans,octa-cis-undecaprenyl diphosphate + di-trans,octa-cis-undecaprenyl diphosphate + H(+). Its pathway is cell wall biogenesis; peptidoglycan biosynthesis. Functionally, peptidoglycan polymerase that is essential for cell division. In Haemophilus influenzae (strain ATCC 51907 / DSM 11121 / KW20 / Rd), this protein is Probable peptidoglycan glycosyltransferase FtsW.